Here is a 557-residue protein sequence, read N- to C-terminus: Formate--tetrahydrofolate ligase (557 aa).

Position 66 to 73 (T66 to S73) interacts with ATP.

It belongs to the formate--tetrahydrofolate ligase family.

It carries out the reaction (6S)-5,6,7,8-tetrahydrofolate + formate + ATP = (6R)-10-formyltetrahydrofolate + ADP + phosphate. It participates in one-carbon metabolism; tetrahydrofolate interconversion. In Lactobacillus johnsonii (strain CNCM I-12250 / La1 / NCC 533), this protein is Formate--tetrahydrofolate ligase.